The chain runs to 370 residues: 2-oxoisovalerate dehydrogenase subunit beta, mitochondrial (370 aa).

The transit peptide at 1 to 25 directs the protein to the mitochondrion; the sequence is MLRGNNIKKVNSLLVRSFHSTVGNR. Residue Y130 participates in thiamine diphosphate binding. The K(+) site is built by G156, L158, T159, and E209.

Heterotetramer of 2 alpha and 2 beta chains. It depends on thiamine diphosphate as a cofactor.

The protein localises to the mitochondrion matrix. The enzyme catalyses N(6)-[(R)-lipoyl]-L-lysyl-[protein] + 3-methyl-2-oxobutanoate + H(+) = N(6)-[(R)-S(8)-2-methylpropanoyldihydrolipoyl]-L-lysyl-[protein] + CO2. Its function is as follows. The branched-chain alpha-keto dehydrogenase complex catalyzes the overall conversion of alpha-keto acids to acyl-CoA and CO(2). It contains multiple copies of three enzymatic components: branched-chain alpha-keto acid decarboxylase (E1), lipoamide acyltransferase (E2) and lipoamide dehydrogenase (E3). The chain is 2-oxoisovalerate dehydrogenase subunit beta, mitochondrial (bkdB) from Dictyostelium discoideum (Social amoeba).